Reading from the N-terminus, the 495-residue chain is BUB3-interacting and GLEBS motif-containing protein ZNF207 (495 aa).

Positions 1–92 are microtubule-binding region; the sequence is MGRKKKKQLK…EGIPEKDMDE (92 aa). 2 consecutive C2H2-type zinc fingers follow at residues 11-34 and 35-58; these read PWCW…KAKH and FKCH…MQVH. Residues 99-111 show a composition bias toward basic and acidic residues; the sequence is QKTQESQKKKQQD. Disordered regions lie at residues 99-161, 252-292, and 316-372; these read QKTQ…PGIP, PPAP…SNSE, and VGTD…ATLT. Positions 112-121 are enriched in acidic residues; the sequence is DSDEYDDDES. The span at 127–136 shows a compositional bias: polar residues; the sequence is FQPQPVQPQQ. The span at 142–161 shows a compositional bias: pro residues; that stretch reads MAQPGLPPVPGAPGMPPGIP. Composition is skewed to low complexity over residues 283–292 and 326–372; these read SSSTASSNSE and TPAA…ATLT. Positions 376-408 are GLEBS; sequence ATSKLIHPDEDISLEERRAQLPKYQRNLPRPGQ. The disordered stretch occupies residues 462–495; that stretch reads PYGQGPPMVPPYQGGPPRPPMGMRPPVMSQGGRY. Residues 464 to 484 show a composition bias toward pro residues; it reads GQGPPMVPPYQGGPPRPPMGM.

In terms of assembly, interacts (via GLEBS region) with BUB3. As to expression, in day-13 embryo, strongly expressed in the nervous system (brain, spinal cord and dorsal root ganglia), with strong to weak expression in other regions. Continues to be strongly expressed in the neonatal brain while expression is weak in the brain and spinal cord of adult.

Its subcellular location is the nucleus. The protein resides in the chromosome. It is found in the centromere. It localises to the kinetochore. The protein localises to the cytoplasm. Its subcellular location is the cytoskeleton. The protein resides in the spindle. Kinetochore- and microtubule-binding protein that plays a key role in spindle assembly. ZNF207/BuGZ is mainly composed of disordered low-complexity regions and undergoes phase transition or coacervation to form temperature-dependent liquid droplets. Coacervation promotes microtubule bundling and concentrates tubulin, promoting microtubule polymerization and assembly of spindle and spindle matrix by concentrating its building blocks. Also acts as a regulator of mitotic chromosome alignment by mediating the stability and kinetochore loading of BUB3. Mechanisms by which BUB3 is protected are unclear: according to a first report, ZNF207/BuGZ may act by blocking ubiquitination and proteasomal degradation of BUB3. According to another report, the stabilization is independent of the proteasome. This Mus musculus (Mouse) protein is BUB3-interacting and GLEBS motif-containing protein ZNF207.